We begin with the raw amino-acid sequence, 704 residues long: Acetate--CoA ligase [ADP-forming] (704 aa).

The protein in the N-terminal section; belongs to the acetate CoA ligase alpha subunit family. This sequence in the C-terminal section; belongs to the acetate CoA ligase beta subunit family. In terms of assembly, homodimer.

It carries out the reaction acetate + ATP + CoA = acetyl-CoA + ADP + phosphate. Functionally, catalyzes the formation of acetate and ATP from acetyl-CoA by using ADP and phosphate. Can also use butyryl-CoA, but not phenylacetyl-CoA. Cannot catalyze the reverse reaction. The polypeptide is Acetate--CoA ligase [ADP-forming] (Methanocaldococcus jannaschii (strain ATCC 43067 / DSM 2661 / JAL-1 / JCM 10045 / NBRC 100440) (Methanococcus jannaschii)).